Reading from the N-terminus, the 58-residue chain is Small ribosomal subunit protein bS21 (58 aa).

Belongs to the bacterial ribosomal protein bS21 family.

The chain is Small ribosomal subunit protein bS21 from Streptococcus pyogenes serotype M49 (strain NZ131).